Here is a 510-residue protein sequence, read N- to C-terminus: Lysine--tRNA ligase (510 aa).

The Mg(2+) site is built by Glu420 and Glu427.

Belongs to the class-II aminoacyl-tRNA synthetase family. Homodimer. The cofactor is Mg(2+).

Its subcellular location is the cytoplasm. The enzyme catalyses tRNA(Lys) + L-lysine + ATP = L-lysyl-tRNA(Lys) + AMP + diphosphate. The polypeptide is Lysine--tRNA ligase (Ralstonia nicotianae (strain ATCC BAA-1114 / GMI1000) (Ralstonia solanacearum)).